A 364-amino-acid polypeptide reads, in one-letter code: D-alanine--D-alanine ligase (364 aa).

The region spanning 141–346 (KNLFAQAGLR…YSELIERLIA (206 aa)) is the ATP-grasp domain. 174 to 229 (EQELGYPCFVKPANAGSSVGISKCKQRDDLKTAFAEAFKYDRKIIIEESIVGREIE) serves as a coordination point for ATP. Residues aspartate 300, glutamate 313, and asparagine 315 each contribute to the Mg(2+) site.

It belongs to the D-alanine--D-alanine ligase family. Requires Mg(2+) as cofactor. The cofactor is Mn(2+).

It is found in the cytoplasm. It carries out the reaction 2 D-alanine + ATP = D-alanyl-D-alanine + ADP + phosphate + H(+). The protein operates within cell wall biogenesis; peptidoglycan biosynthesis. Its function is as follows. Cell wall formation. This chain is D-alanine--D-alanine ligase, found in Geobacillus thermodenitrificans (strain NG80-2).